A 184-amino-acid chain; its full sequence is dCTP deaminase (184 aa).

DCTP is bound by residues 107–112 (KSTYAR), 131–133 (TLE), glutamine 152, tyrosine 166, and glutamine 176. The active-site Proton donor/acceptor is glutamate 133.

This sequence belongs to the dCTP deaminase family. Homotrimer.

The catalysed reaction is dCTP + H2O + H(+) = dUTP + NH4(+). The protein operates within pyrimidine metabolism; dUMP biosynthesis; dUMP from dCTP (dUTP route): step 1/2. Catalyzes the deamination of dCTP to dUTP. In Paramagnetospirillum magneticum (strain ATCC 700264 / AMB-1) (Magnetospirillum magneticum), this protein is dCTP deaminase.